Here is a 362-residue protein sequence, read N- to C-terminus: Heme A synthase (362 aa).

5 consecutive transmembrane segments (helical) span residues 12–32 (AVKI…LVGG), 102–122 (VIGL…HLGG), 128–148 (LWLI…MVAS), 159–179 (ERLA…VWTL), and 198–218 (AAAL…VAGL). H262 serves as a coordination point for heme. A run of 3 helical transmembrane segments spans residues 264–286 (MLAY…ARAG), 291–311 (GAVW…FTLL), and 314–334 (VPIG…MLGV). H322 contacts heme.

Belongs to the COX15/CtaA family. Type 2 subfamily. In terms of assembly, interacts with CtaB. It depends on heme b as a cofactor.

The protein resides in the cell membrane. The enzyme catalyses Fe(II)-heme o + 2 A + H2O = Fe(II)-heme a + 2 AH2. It participates in porphyrin-containing compound metabolism; heme A biosynthesis; heme A from heme O: step 1/1. Its function is as follows. Catalyzes the conversion of heme O to heme A by two successive hydroxylations of the methyl group at C8. The first hydroxylation forms heme I, the second hydroxylation results in an unstable dihydroxymethyl group, which spontaneously dehydrates, resulting in the formyl group of heme A. This chain is Heme A synthase, found in Rhodopseudomonas palustris (strain BisA53).